Here is a 513-residue protein sequence, read N- to C-terminus: ATP synthase subunit alpha (513 aa).

172 to 179 (GDRQTGKT) is an ATP binding site.

Belongs to the ATPase alpha/beta chains family. As to quaternary structure, F-type ATPases have 2 components, CF(1) - the catalytic core - and CF(0) - the membrane proton channel. CF(1) has five subunits: alpha(3), beta(3), gamma(1), delta(1), epsilon(1). CF(0) has three main subunits: a(1), b(2) and c(9-12). The alpha and beta chains form an alternating ring which encloses part of the gamma chain. CF(1) is attached to CF(0) by a central stalk formed by the gamma and epsilon chains, while a peripheral stalk is formed by the delta and b chains.

It localises to the cell inner membrane. It catalyses the reaction ATP + H2O + 4 H(+)(in) = ADP + phosphate + 5 H(+)(out). In terms of biological role, produces ATP from ADP in the presence of a proton gradient across the membrane. The alpha chain is a regulatory subunit. The chain is ATP synthase subunit alpha from Gluconacetobacter diazotrophicus (strain ATCC 49037 / DSM 5601 / CCUG 37298 / CIP 103539 / LMG 7603 / PAl5).